The following is a 192-amino-acid chain: Protein GrpE (192 aa).

It belongs to the GrpE family. As to quaternary structure, homodimer.

It is found in the cytoplasm. Its function is as follows. Participates actively in the response to hyperosmotic and heat shock by preventing the aggregation of stress-denatured proteins, in association with DnaK and GrpE. It is the nucleotide exchange factor for DnaK and may function as a thermosensor. Unfolded proteins bind initially to DnaJ; upon interaction with the DnaJ-bound protein, DnaK hydrolyzes its bound ATP, resulting in the formation of a stable complex. GrpE releases ADP from DnaK; ATP binding to DnaK triggers the release of the substrate protein, thus completing the reaction cycle. Several rounds of ATP-dependent interactions between DnaJ, DnaK and GrpE are required for fully efficient folding. In Neisseria gonorrhoeae (strain NCCP11945), this protein is Protein GrpE.